Here is a 479-residue protein sequence, read N- to C-terminus: Phosphoglycerate kinase, glycosomal (479 aa).

12 residues coordinate (2R)-3-phosphoglycerate: Val-23, Asp-24, Phe-25, Asn-26, Arg-39, Ser-61, His-62, Gly-64, Arg-65, Arg-132, His-168, and Arg-169. Positions 214 and 215 each coordinate ADP. Gly-214 is a CDP binding site. 2 residues coordinate AMP: Ala-215 and Lys-216. Ala-215 is a binding site for ATP. Mg(2+) is bound at residue Ala-215. Lys-216 is a (2R)-3-phosphoglycerate binding site. Asp-219 contributes to the CDP binding site. Asp-219 provides a ligand contact to Mg(2+). ADP-binding residues include Lys-220 and Gly-238. Lys-220 contributes to the AMP binding site. Position 220 (Lys-220) interacts with ATP. Residue Gly-238 coordinates CDP. The AMP site is built by Ala-239 and Ala-311. ATP contacts are provided by Ala-239 and Ala-311. Residues Ala-311 and Asn-335 each coordinate ADP. Residues Gly-336 and Phe-341 each contribute to the CDP site. 4 residues coordinate ADP: Phe-341, Glu-342, Asp-374, and Ser-375. Glu-342 is an AMP binding site. ATP is bound by residues Glu-342, Asp-374, and Ser-375. Asp-374 lines the Mg(2+) pocket.

Belongs to the phosphoglycerate kinase family. In terms of assembly, monomer. Mg(2+) is required as a cofactor.

Its subcellular location is the glycosome. The catalysed reaction is (2R)-3-phosphoglycerate + ATP = (2R)-3-phospho-glyceroyl phosphate + ADP. It functions in the pathway carbohydrate degradation; glycolysis; pyruvate from D-glyceraldehyde 3-phosphate: step 2/5. The sequence is that of Phosphoglycerate kinase, glycosomal (PGKC) from Leishmania major.